We begin with the raw amino-acid sequence, 665 residues long: DNA ligase (665 aa).

Residues 31 to 35 (DEEFD), 80 to 81 (SL), and Glu111 contribute to the NAD(+) site. Lys113 serves as the catalytic N6-AMP-lysine intermediate. NAD(+) contacts are provided by Arg134, Glu171, Lys287, and Lys311. Positions 405, 408, 423, and 429 each coordinate Zn(2+). Residues 588–665 (FTNHAFQGKI…NEKEFISLCH (78 aa)) enclose the BRCT domain.

The protein belongs to the NAD-dependent DNA ligase family. LigA subfamily. Requires Mg(2+) as cofactor. Mn(2+) is required as a cofactor.

The catalysed reaction is NAD(+) + (deoxyribonucleotide)n-3'-hydroxyl + 5'-phospho-(deoxyribonucleotide)m = (deoxyribonucleotide)n+m + AMP + beta-nicotinamide D-nucleotide.. DNA ligase that catalyzes the formation of phosphodiester linkages between 5'-phosphoryl and 3'-hydroxyl groups in double-stranded DNA using NAD as a coenzyme and as the energy source for the reaction. It is essential for DNA replication and repair of damaged DNA. This is DNA ligase from Protochlamydia amoebophila (strain UWE25).